A 753-amino-acid chain; its full sequence is 5-methyltetrahydropteroyltriglutamate--homocysteine methyltransferase (753 aa).

Residues 17-20 and Lys-117 each bind 5-methyltetrahydropteroyltri-L-glutamate; that span reads RELK. L-homocysteine-binding positions include 431-433 and Glu-484; that span reads IGS. L-methionine is bound by residues 431–433 and Glu-484; that span reads IGS. Residues 515–516 and Trp-561 contribute to the 5-methyltetrahydropteroyltri-L-glutamate site; that span reads RC. Residue Asp-599 coordinates L-homocysteine. L-methionine is bound at residue Asp-599. Glu-605 contacts 5-methyltetrahydropteroyltri-L-glutamate. Residues His-641, Cys-643, and Glu-665 each coordinate Zn(2+). His-694 serves as the catalytic Proton donor. Residue Cys-726 coordinates Zn(2+).

Belongs to the vitamin-B12 independent methionine synthase family. The cofactor is Zn(2+).

The enzyme catalyses 5-methyltetrahydropteroyltri-L-glutamate + L-homocysteine = tetrahydropteroyltri-L-glutamate + L-methionine. It functions in the pathway amino-acid biosynthesis; L-methionine biosynthesis via de novo pathway; L-methionine from L-homocysteine (MetE route): step 1/1. Functionally, catalyzes the transfer of a methyl group from 5-methyltetrahydrofolate to homocysteine resulting in methionine formation. The chain is 5-methyltetrahydropteroyltriglutamate--homocysteine methyltransferase from Escherichia coli O6:K15:H31 (strain 536 / UPEC).